The sequence spans 132 residues: Small ribosomal subunit protein uS8 (132 aa).

It belongs to the universal ribosomal protein uS8 family. Part of the 30S ribosomal subunit. Contacts proteins S5 and S12.

Functionally, one of the primary rRNA binding proteins, it binds directly to 16S rRNA central domain where it helps coordinate assembly of the platform of the 30S subunit. The chain is Small ribosomal subunit protein uS8 from Brucella abortus (strain S19).